The primary structure comprises 637 residues: tRNA 5-methylaminomethyl-2-thiouridine biosynthesis bifunctional protein MnmC (637 aa).

Residues 1-232 are tRNA (mnm(5)s(2)U34)-methyltransferase; sequence MPERIEWLED…KRDNLQGEFN (232 aa). The tract at residues 255–637 is FAD-dependent cmnm(5)s(2)U34 oxidoreductase; it reads IGAGLAGAAV…YGEAKLVSED (383 aa).

It in the N-terminal section; belongs to the methyltransferase superfamily. tRNA (mnm(5)s(2)U34)-methyltransferase family. The protein in the C-terminal section; belongs to the DAO family. Requires FAD as cofactor.

The protein localises to the cytoplasm. The enzyme catalyses 5-aminomethyl-2-thiouridine(34) in tRNA + S-adenosyl-L-methionine = 5-methylaminomethyl-2-thiouridine(34) in tRNA + S-adenosyl-L-homocysteine + H(+). In terms of biological role, catalyzes the last two steps in the biosynthesis of 5-methylaminomethyl-2-thiouridine (mnm(5)s(2)U) at the wobble position (U34) in tRNA. Catalyzes the FAD-dependent demodification of cmnm(5)s(2)U34 to nm(5)s(2)U34, followed by the transfer of a methyl group from S-adenosyl-L-methionine to nm(5)s(2)U34, to form mnm(5)s(2)U34. This chain is tRNA 5-methylaminomethyl-2-thiouridine biosynthesis bifunctional protein MnmC, found in Polaromonas sp. (strain JS666 / ATCC BAA-500).